The chain runs to 288 residues: Energy-coupling factor transporter ATP-binding protein EcfA2 (288 aa).

An ABC transporter domain is found at 3-246 (IKLEQLGYCY…PDELVDLGLS (244 aa)). Position 40–47 (40–47 (GHTGSGKS)) interacts with ATP.

It belongs to the ABC transporter superfamily. Energy-coupling factor EcfA family. In terms of assembly, forms a stable energy-coupling factor (ECF) transporter complex composed of 2 membrane-embedded substrate-binding proteins (S component), 2 ATP-binding proteins (A component) and 2 transmembrane proteins (T component).

The protein resides in the cell membrane. ATP-binding (A) component of a common energy-coupling factor (ECF) ABC-transporter complex. Unlike classic ABC transporters this ECF transporter provides the energy necessary to transport a number of different substrates. The polypeptide is Energy-coupling factor transporter ATP-binding protein EcfA2 (Listeria monocytogenes serotype 4b (strain F2365)).